Consider the following 229-residue polypeptide: Orotidine 5'-phosphate decarboxylase (229 aa).

Substrate is bound by residues Asp-11, Lys-33, 60-69 (DLKFHDIPNT), Thr-119, Arg-180, Gln-189, Gly-209, and Arg-210. The active-site Proton donor is Lys-62.

The protein belongs to the OMP decarboxylase family. Type 1 subfamily. In terms of assembly, homodimer.

The enzyme catalyses orotidine 5'-phosphate + H(+) = UMP + CO2. The protein operates within pyrimidine metabolism; UMP biosynthesis via de novo pathway; UMP from orotate: step 2/2. Functionally, catalyzes the decarboxylation of orotidine 5'-monophosphate (OMP) to uridine 5'-monophosphate (UMP). This Dichelobacter nodosus (strain VCS1703A) protein is Orotidine 5'-phosphate decarboxylase.